Here is a 308-residue protein sequence, read N- to C-terminus: Urease accessory protein UreD (308 aa).

This sequence belongs to the UreD family. In terms of assembly, ureD, UreF and UreG form a complex that acts as a GTP-hydrolysis-dependent molecular chaperone, activating the urease apoprotein by helping to assemble the nickel containing metallocenter of UreC. The UreE protein probably delivers the nickel.

It localises to the cytoplasm. Required for maturation of urease via the functional incorporation of the urease nickel metallocenter. This chain is Urease accessory protein UreD, found in Psychromonas ingrahamii (strain DSM 17664 / CCUG 51855 / 37).